The chain runs to 535 residues: Serine/threonine-protein kinase C (535 aa).

The Protein kinase domain maps to 12–277; it reads YRIIETLGRG…AMAQTLQGNF (266 aa). ATP-binding positions include 18–26 and lysine 43; that span reads LGRGGFGET. Aspartate 142 functions as the Proton acceptor in the catalytic mechanism. Residues 371–535 are disordered; the sequence is NNPPPAVEEP…GEKPIDPEQN (165 aa). Pro residues predominate over residues 402-421; it reads SPIPTPATPSPEPTPSPSPS. Residues 422–435 are compositionally biased toward low complexity; that stretch reads PETTSSPTEDTITP. 2 stretches are compositionally biased toward pro residues: residues 446 to 464 and 472 to 498; these read APIP…PQPS and TPAP…PTPQ.

The protein belongs to the protein kinase superfamily. Ser/Thr protein kinase family.

It carries out the reaction L-seryl-[protein] + ATP = O-phospho-L-seryl-[protein] + ADP + H(+). The catalysed reaction is L-threonyl-[protein] + ATP = O-phospho-L-threonyl-[protein] + ADP + H(+). In Synechocystis sp. (strain ATCC 27184 / PCC 6803 / Kazusa), this protein is Serine/threonine-protein kinase C (spkC).